Reading from the N-terminus, the 102-residue chain is Large ribosomal subunit protein bL21 (102 aa).

The protein belongs to the bacterial ribosomal protein bL21 family. As to quaternary structure, part of the 50S ribosomal subunit. Contacts protein L20.

This protein binds to 23S rRNA in the presence of protein L20. This chain is Large ribosomal subunit protein bL21, found in Ligilactobacillus salivarius (strain UCC118) (Lactobacillus salivarius).